The chain runs to 601 residues: uncharacterized protein (601 aa).

The first 24 residues, 1-24 (MKLSSLPSGLGLASLLGLISSATA), serve as a signal peptide directing secretion.

It is found in the membrane. This is an uncharacterized protein from Schizosaccharomyces pombe (strain 972 / ATCC 24843) (Fission yeast).